Reading from the N-terminus, the 491-residue chain is Protein nucleotidyltransferase YdiU (491 aa).

ATP is bound by residues glycine 94, glycine 96, arginine 97, lysine 117, aspartate 129, glycine 130, arginine 180, and arginine 187. Aspartate 256 functions as the Proton acceptor in the catalytic mechanism. Residues asparagine 257 and aspartate 266 each coordinate Mg(2+). Aspartate 266 serves as a coordination point for ATP.

It belongs to the SELO family. It depends on Mg(2+) as a cofactor. The cofactor is Mn(2+).

The catalysed reaction is L-seryl-[protein] + ATP = 3-O-(5'-adenylyl)-L-seryl-[protein] + diphosphate. It carries out the reaction L-threonyl-[protein] + ATP = 3-O-(5'-adenylyl)-L-threonyl-[protein] + diphosphate. The enzyme catalyses L-tyrosyl-[protein] + ATP = O-(5'-adenylyl)-L-tyrosyl-[protein] + diphosphate. It catalyses the reaction L-histidyl-[protein] + UTP = N(tele)-(5'-uridylyl)-L-histidyl-[protein] + diphosphate. The catalysed reaction is L-seryl-[protein] + UTP = O-(5'-uridylyl)-L-seryl-[protein] + diphosphate. It carries out the reaction L-tyrosyl-[protein] + UTP = O-(5'-uridylyl)-L-tyrosyl-[protein] + diphosphate. Nucleotidyltransferase involved in the post-translational modification of proteins. It can catalyze the addition of adenosine monophosphate (AMP) or uridine monophosphate (UMP) to a protein, resulting in modifications known as AMPylation and UMPylation. This Clostridium botulinum (strain Eklund 17B / Type B) protein is Protein nucleotidyltransferase YdiU.